A 107-amino-acid chain; its full sequence is Serine palmitoyltransferase-regulating protein TSC3 (107 aa).

A helical transmembrane segment spans residues 72–92; sequence VFFLVVFTLSLFGLLKWVLSL.

It localises to the endoplasmic reticulum membrane. Functionally, stimulates the activity of serine palmitoyltransferase (SPT). This is Serine palmitoyltransferase-regulating protein TSC3 (TSC3) from Eremothecium gossypii (strain ATCC 10895 / CBS 109.51 / FGSC 9923 / NRRL Y-1056) (Yeast).